Reading from the N-terminus, the 447-residue chain is MGYMDLALSYSNQMRIVEAPASGGGLSQNGKFSYGYASSAGKRSSMEDFFETRIDGIDGEIVGLFGVFDGHGGSRAAEYVKRHLFSNLITHPKFISDTKSAIADAYTHTDSELLKSENSHTRDAGSTASTAILVGDRLLVANVGDSRAVICRGGNAFAVSRDHKPDQSDERERIENAGGFVMWAGTWRVGGVLAVSRAFGDRLLKQYVVADPEIQEEKIDDSLEFLILASDGLWDVFSNEEAVAVVKEVEDPEESTKKLVGEAIKRGSADNITCVVVRFLESKSANNNGSSSSEEANQVPTAVRNDSDHKISAKETNQDHTTVNKDLDRNTDSQSLNQKPIAARSADNSNQKPIATTATGHSVSSEQSGLTGEKSQMPIKIRSDSEPKSSAKVPNQTQSTVHNDLDSSTAKKPAATEQSGSTGERNRKPIKVHSDSAARKTTPSIFN.

Residues 33–279 (SYGYASSAGK…DNITCVVVRF (247 aa)) form the PPM-type phosphatase domain. Mn(2+) contacts are provided by Asp69, Gly70, Asp231, and Asp270. Positions 284 to 297 (SANNNGSSSSEEAN) are enriched in low complexity. The disordered stretch occupies residues 284 to 447 (SANNNGSSSS…ARKTTPSIFN (164 aa)). Basic and acidic residues predominate over residues 305–331 (NDSDHKISAKETNQDHTTVNKDLDRNT). 2 stretches are compositionally biased toward polar residues: residues 346 to 374 (ADNSNQKPIATTATGHSVSSEQSGLTGEK) and 392 to 423 (KVPNQTQSTVHNDLDSSTAKKPAATEQSGSTG). Basic and acidic residues predominate over residues 424-438 (ERNRKPIKVHSDSAA).

Belongs to the PP2C family. Mg(2+) is required as a cofactor. Mn(2+) serves as cofactor.

The catalysed reaction is O-phospho-L-seryl-[protein] + H2O = L-seryl-[protein] + phosphate. It catalyses the reaction O-phospho-L-threonyl-[protein] + H2O = L-threonyl-[protein] + phosphate. This chain is Probable protein phosphatase 2C 71, found in Arabidopsis thaliana (Mouse-ear cress).